The chain runs to 491 residues: Glutamyl-tRNA(Gln) amidotransferase subunit A (491 aa).

Residues Lys-78 and Ser-158 each act as charge relay system in the active site. The active-site Acyl-ester intermediate is the Ser-182.

It belongs to the amidase family. GatA subfamily. Heterotrimer of A, B and C subunits.

It carries out the reaction L-glutamyl-tRNA(Gln) + L-glutamine + ATP + H2O = L-glutaminyl-tRNA(Gln) + L-glutamate + ADP + phosphate + H(+). Its function is as follows. Allows the formation of correctly charged Gln-tRNA(Gln) through the transamidation of misacylated Glu-tRNA(Gln) in organisms which lack glutaminyl-tRNA synthetase. The reaction takes place in the presence of glutamine and ATP through an activated gamma-phospho-Glu-tRNA(Gln). This is Glutamyl-tRNA(Gln) amidotransferase subunit A from Afipia carboxidovorans (strain ATCC 49405 / DSM 1227 / KCTC 32145 / OM5) (Oligotropha carboxidovorans).